The following is a 465-amino-acid chain: Chromosomal replication initiator protein DnaA (465 aa).

Residues 1-87 (MLWTDCLTRL…RPGSILSSSE (87 aa)) are domain I, interacts with DnaA modulators. Positions 81 to 123 (SILSSSEQPATTTAALQTAPIPQPAKGKREPEPVANTAVSSKS) are disordered. The span at 88–100 (QPATTTAALQTAP) shows a compositional bias: low complexity. The domain II stretch occupies residues 88 to 127 (QPATTTAALQTAPIPQPAKGKREPEPVANTAVSSKSSKKK). A domain III, AAA+ region region spans residues 128–345 (LLNPQFTFSL…GALNKVVAIS (218 aa)). 4 residues coordinate ATP: Gly173, Gly175, Lys176, and Thr177. The tract at residues 346 to 465 (RFKGAPIDLD…YKNLLRLLQS (120 aa)) is domain IV, binds dsDNA.

Belongs to the DnaA family. Oligomerizes as a right-handed, spiral filament on DNA at oriC.

It localises to the cytoplasm. In terms of biological role, plays an essential role in the initiation and regulation of chromosomal replication. ATP-DnaA binds to the origin of replication (oriC) to initiate formation of the DNA replication initiation complex once per cell cycle. Binds the DnaA box (a 9 base pair repeat at the origin) and separates the double-stranded (ds)DNA. Forms a right-handed helical filament on oriC DNA; dsDNA binds to the exterior of the filament while single-stranded (ss)DNA is stabiized in the filament's interior. The ATP-DnaA-oriC complex binds and stabilizes one strand of the AT-rich DNA unwinding element (DUE), permitting loading of DNA polymerase. After initiation quickly degrades to an ADP-DnaA complex that is not apt for DNA replication. Binds acidic phospholipids. The sequence is that of Chromosomal replication initiator protein DnaA from Acinetobacter baumannii (strain SDF).